A 187-amino-acid chain; its full sequence is Protein GrpE (187 aa).

Residues 1-17 are compositionally biased toward low complexity; the sequence is MSNEEQQQPNPAAQAPE. Residues 1–27 form a disordered region; that stretch reads MSNEEQQQPNPAAQAPEGAVTEGAAPE.

It belongs to the GrpE family. As to quaternary structure, homodimer.

The protein resides in the cytoplasm. Participates actively in the response to hyperosmotic and heat shock by preventing the aggregation of stress-denatured proteins, in association with DnaK and GrpE. It is the nucleotide exchange factor for DnaK and may function as a thermosensor. Unfolded proteins bind initially to DnaJ; upon interaction with the DnaJ-bound protein, DnaK hydrolyzes its bound ATP, resulting in the formation of a stable complex. GrpE releases ADP from DnaK; ATP binding to DnaK triggers the release of the substrate protein, thus completing the reaction cycle. Several rounds of ATP-dependent interactions between DnaJ, DnaK and GrpE are required for fully efficient folding. The sequence is that of Protein GrpE from Thioalkalivibrio sulfidiphilus (strain HL-EbGR7).